The following is a 116-amino-acid chain: Large ribosomal subunit protein bL17 (116 aa).

It belongs to the bacterial ribosomal protein bL17 family. Part of the 50S ribosomal subunit. Contacts protein L32.

The protein is Large ribosomal subunit protein bL17 of Dictyoglomus thermophilum (strain ATCC 35947 / DSM 3960 / H-6-12).